A 935-amino-acid polypeptide reads, in one-letter code: Disintegrin and metalloproteinase domain-containing protein 22 (935 aa).

The first 24 residues, 1-24 (MHINGGPLASWICCVIGSIHLAHA), serve as a signal peptide directing secretion. A propeptide spanning residues 25–227 (STRPENGGTS…QQTRSQRKKR (203 aa)) is cleaved from the precursor. N-linked (GlcNAc...) asparagine glycans are attached at residues N167 and N210. Residues 228–736 (QTRRYPRNVE…NRDEGVISTN (509 aa)) lie on the Extracellular side of the membrane. The Peptidase M12B domain maps to 241–440 (KYVELMIVND…GGGACLFNKP (200 aa)). Intrachain disulfides connect C351-C435, C394-C419, C396-C403, C449-C479, C460-C476, C462-C468, C475-C496, C487-C493, C492-C518, C505-C525, C512-C544, C537-C549, C556-C607, C571-C637, C585-C595, C602-C665, and C659-C670. One can recognise a Disintegrin domain in the interval 446-533 (PPECGNGFVE…QCPANIHKLD (88 aa)). N521 is a glycosylation site (N-linked (GlcNAc...) asparagine). 2 N-linked (GlcNAc...) asparagine glycosylation sites follow: N609 and N636. An N-linked (GlcNAc...) asparagine glycan is attached at N677. Residues 677-713 (NFSTCLGSTNKICSGHGVCSNEVRCICDRFWTGEDCS) form the EGF-like domain. 3 disulfides stabilise this stretch: C681/C695, C689/C701, and C703/C712. A helical transmembrane segment spans residues 737–757 (IIIGAIAGTILVLALVLGITA). At 758–935 (WGYKNYRRER…QSARLWETSI (178 aa)) the chain is on the cytoplasmic side. Positions 850–935 (VSDVCENGRP…QSARLWETSI (86 aa)) are disordered. Positions 859–870 (PRSNSWQGNVTS) are enriched in polar residues. The span at 871 to 882 (SRKKLRGKRFRP) shows a compositional bias: basic residues. Positions 891-906 (SPAKSPSSSTGSIASS) are enriched in low complexity.

In terms of processing, the precursor is cleaved by a furin endopeptidase. Low levels in adult tissues. Not detected in developing embryos.

The protein resides in the cell membrane. Probable ligand for integrin in the brain. This is a non catalytic metalloprotease-like protein. This Xenopus laevis (African clawed frog) protein is Disintegrin and metalloproteinase domain-containing protein 22 (adam22).